We begin with the raw amino-acid sequence, 203 residues long: Ribosomal RNA large subunit methyltransferase E (203 aa).

S-adenosyl-L-methionine is bound by residues G51, W53, D69, D85, and D108. The active-site Proton acceptor is K148.

It belongs to the class I-like SAM-binding methyltransferase superfamily. RNA methyltransferase RlmE family.

Its subcellular location is the cytoplasm. It carries out the reaction uridine(2552) in 23S rRNA + S-adenosyl-L-methionine = 2'-O-methyluridine(2552) in 23S rRNA + S-adenosyl-L-homocysteine + H(+). Its function is as follows. Specifically methylates the uridine in position 2552 of 23S rRNA at the 2'-O position of the ribose in the fully assembled 50S ribosomal subunit. The protein is Ribosomal RNA large subunit methyltransferase E of Methanosphaerula palustris (strain ATCC BAA-1556 / DSM 19958 / E1-9c).